Reading from the N-terminus, the 192-residue chain is I-Kappa-B like protein H1 (192 aa).

ANK repeat units follow at residues 94–126 (KGAQCTHIIATSNVSCSIDMMNIVLQLGADING), 131–161 (AGLTPLHICVNKKNYALAEWLCQAPGIDVKV), and 165–192 (GKETPYDLACKMEDRKMMKIFEERSKKM).

This sequence belongs to the polydnaviridae I-Kappa-B-like protein family.

Functionally, suppresses the host immune response through NF-kappa-B inactivation. Possesses ankyrin repeat domains required for NF-kappa-B binding but lacks the regulatory regions required for dissociation from NF-kappa-B and degradation. Therefore, prevents host NF-kappa-B release and subsequent activation. This Microplitis demolitor bracovirus (isolate Webb) (MdBV) protein is I-Kappa-B like protein H1 (H4).